The chain runs to 226 residues: UPF0758 protein SE_1336 (226 aa).

One can recognise an MPN domain in the interval 102–224 (QITHPSDVAS…FTSLVEAGYF (123 aa)). H173, H175, and D186 together coordinate Zn(2+). The short motif at 173-186 (HNHPSGDVTPSKED) is the JAMM motif element.

The protein belongs to the UPF0758 family.

The protein is UPF0758 protein SE_1336 of Staphylococcus epidermidis (strain ATCC 12228 / FDA PCI 1200).